The following is a 397-amino-acid chain: Elongation factor Tu (397 aa).

The tr-type G domain occupies 10–207 (KPHCNIGTIG…AVDEWIPQPE (198 aa)). A G1 region spans residues 19–26 (GHVDHGKT). 19-26 (GHVDHGKT) lines the GTP pocket. Position 26 (threonine 26) interacts with Mg(2+). A G2 region spans residues 61–65 (GITIS). The tract at residues 82–85 (DCPG) is G3. GTP contacts are provided by residues 82–86 (DCPGH) and 137–140 (NKVD). The tract at residues 137–140 (NKVD) is G4. Positions 175–177 (SAL) are G5.

It belongs to the TRAFAC class translation factor GTPase superfamily. Classic translation factor GTPase family. EF-Tu/EF-1A subfamily. Monomer.

It is found in the cytoplasm. It catalyses the reaction GTP + H2O = GDP + phosphate + H(+). In terms of biological role, GTP hydrolase that promotes the GTP-dependent binding of aminoacyl-tRNA to the A-site of ribosomes during protein biosynthesis. This is Elongation factor Tu from Sphingopyxis alaskensis (strain DSM 13593 / LMG 18877 / RB2256) (Sphingomonas alaskensis).